Reading from the N-terminus, the 236-residue chain is Phosphoserine phosphatase (236 aa).

The active-site Nucleophile is the aspartate 30. Residues aspartate 30 and aspartate 32 each coordinate Mg(2+). The active-site Proton donor is the aspartate 32. Substrate contacts are provided by residues glutamate 39, arginine 76, 120 to 121, and lysine 169; that span reads SG. Aspartate 192 lines the Mg(2+) pocket. Asparagine 195 contributes to the substrate binding site.

Belongs to the HAD-like hydrolase superfamily. SerB family. Mg(2+) is required as a cofactor.

The catalysed reaction is O-phospho-L-serine + H2O = L-serine + phosphate. It catalyses the reaction O-phospho-D-serine + H2O = D-serine + phosphate. It functions in the pathway amino-acid biosynthesis; L-serine biosynthesis; L-serine from 3-phospho-D-glycerate: step 3/3. The chain is Phosphoserine phosphatase from Polaromonas sp. (strain JS666 / ATCC BAA-500).